The primary structure comprises 144 residues: Large ribosomal subunit protein uL16 (144 aa).

It belongs to the universal ribosomal protein uL16 family. Part of the 50S ribosomal subunit.

Its function is as follows. Binds 23S rRNA and is also seen to make contacts with the A and possibly P site tRNAs. This is Large ribosomal subunit protein uL16 from Bacillus mycoides (strain KBAB4) (Bacillus weihenstephanensis).